Consider the following 239-residue polypeptide: Putative 3-methyladenine DNA glycosylase (239 aa).

Belongs to the DNA glycosylase MPG family.

This Pseudomonas aeruginosa (strain ATCC 15692 / DSM 22644 / CIP 104116 / JCM 14847 / LMG 12228 / 1C / PRS 101 / PAO1) protein is Putative 3-methyladenine DNA glycosylase.